Here is a 422-residue protein sequence, read N- to C-terminus: Histidine--tRNA ligase (422 aa).

Belongs to the class-II aminoacyl-tRNA synthetase family. In terms of assembly, homodimer.

It is found in the cytoplasm. It catalyses the reaction tRNA(His) + L-histidine + ATP = L-histidyl-tRNA(His) + AMP + diphosphate + H(+). The sequence is that of Histidine--tRNA ligase from Alcanivorax borkumensis (strain ATCC 700651 / DSM 11573 / NCIMB 13689 / SK2).